Consider the following 341-residue polypeptide: Thromboxane A2 receptor (341 aa).

Topologically, residues 1 to 29 (MWLNSTSLGACFRPVNITLQERRAIASPW) are extracellular. Asn4 and Asn16 each carry an N-linked (GlcNAc...) asparagine glycan. A helical transmembrane segment spans residues 30–52 (FAASFCALGLGSNLLALSVLAGA). Over 53-65 (RPGAGPRSSFLAL) the chain is Cytoplasmic. A helical membrane pass occupies residues 66 to 86 (LCGLVLTDFLGLLVTGAVVAS). Over 87–105 (QHAALLDWRATDPGCRLCH) the chain is Extracellular. Cys104 and Cys181 form a disulfide bridge. A helical transmembrane segment spans residues 106–127 (FMGAAMVFFGLCPLLLGAAMAA). Topologically, residues 128-147 (ERFVGITRPFSRPAATSRRA) are cytoplasmic. The helical transmembrane segment at 148 to 170 (WATVGLVWVGAGTLGLLPLLGLG) threads the bilayer. The Extracellular portion of the chain corresponds to 171–191 (RYSVQYPGSWCFLTLGAERGD). A helical membrane pass occupies residues 192–217 (VAFGLMFALLGSVSVGLSLLLNTVSV). At 218 to 244 (ATLCRVYHAREATQRPRDCEVEMMVQL) the chain is on the cytoplasmic side. A helical membrane pass occupies residues 245-268 (VGIMVVATVCWMPLLVFILQTLLQ). Residues 269–287 (TLPVMSPSGQLLRTTERQL) are Extracellular-facing. Residues 288–309 (LIYLRVATWNQILDPWVYILFR) form a helical membrane-spanning segment. The Cytoplasmic segment spans residues 310–341 (RSVLRRLHPRFTSQLQAVSLHSPPTQAMLSGP). Ser328 carries the phosphoserine modification.

It belongs to the G-protein coupled receptor 1 family. Interacts with RPGRIP1L. Interacts with RACK1; the interaction regulates TBXA2R cell surface expression. In terms of tissue distribution, in the brain, expressed in all types of glial cells. In the kidney, expressed in the mesangial cells of the glomerulus, smooth muscle cells of the renal arterioles, and in transitional cell epithelium of renal pelvis.

Its subcellular location is the cell membrane. In terms of biological role, receptor for thromboxane A2 (TXA2), a potent stimulator of platelet aggregation. The activity of this receptor is mediated by a G-protein that activates a phosphatidylinositol-calcium second messenger system. In the kidney, the binding of TXA2 to glomerular TP receptors causes intense vasoconstriction. Activates phospholipase C and adenylyl cyclase. This is Thromboxane A2 receptor (Tbxa2r) from Rattus norvegicus (Rat).